The sequence spans 1367 residues: Phospholipid-transporting ATPase C4F10.16c (1367 aa).

Over 1-154 the chain is Cytoplasmic; sequence MPSLINFDAI…PKNLWNQFKN (154 aa). The interval 34-104 is disordered; it reads HNGSLAHEGP…KKNEAGTESG (71 aa). Basic and acidic residues predominate over residues 50–70; it reads SSRHHESQFSQEAHAEQRSRD. The segment covering 77 to 92 has biased composition (polar residues); sequence FEGSCNNSDQSWTSRV. The helical transmembrane segment at 155 to 172 threads the bilayer; it reads IANAFFLFVTLLQCIPLF. Residues 173-177 are Lumenal-facing; the sequence is CPEHL. A helical membrane pass occupies residues 178–197; sequence GLSFIPLSVILLTTAIKDGI. Over 198–482 the chain is Cytoplasmic; it reads EDYRRCVLDK…PSKRSRITRD (285 aa). A helical transmembrane segment spans residues 483 to 503; sequence LNWTIILNFLLLFAMCLFSGV. The Lumenal segment spans residues 504–531; it reads LRSIYSAQNNSARVFELSKNSNTAPAHG. The helical transmembrane segment at 532–552 threads the bilayer; sequence IISIFTSLILFQNLVPISLYI. Topologically, residues 553–1091 are cytoplasmic; it reads TMDIVRSIQS…GRWDYKRMSQ (539 aa). Asp-600 serves as the catalytic 4-aspartylphosphate intermediate. Residues Asp-600, Lys-601, Thr-602, Glu-724, Phe-765, Ser-767, Lys-770, Lys-788, Arg-822, Thr-823, Thr-902, Gly-903, Asp-904, Arg-1009, and Lys-1015 each coordinate ATP. Asp-600 lines the Mg(2+) pocket. Thr-602 lines the Mg(2+) pocket. Asp-1035 provides a ligand contact to Mg(2+). Positions 1038 and 1039 each coordinate ATP. Asp-1039 contributes to the Mg(2+) binding site. The helical transmembrane segment at 1092–1112 threads the bilayer; that stretch reads MISFFFYKNVIWTFILFWYQF. The Lumenal portion of the chain corresponds to 1113 to 1124; the sequence is YNEFDGNYIFDY. Residues 1125-1145 form a helical membrane-spanning segment; the sequence is TYVMLFNLLFTSLPVIIAGCF. Residues 1146 to 1174 are Cytoplasmic-facing; the sequence is DQDVDASVSMKNPSLYQRGILGLEWNGKR. A helical transmembrane segment spans residues 1175 to 1197; sequence FWSYMLDGIYQSLVCFGVALFVF. Topologically, residues 1198–1212 are lumenal; sequence KFGDFVSWTGRNIEC. A helical membrane pass occupies residues 1213–1233; sequence IEDIGLFISSPTIFVINIFIL. At 1234–1240 the chain is on the cytoplasmic side; the sequence is MNQERLN. The chain crosses the membrane as a helical span at residues 1241–1261; sequence LISLITWMFSIGVFWIWTFIY. Over 1262 to 1276 the chain is Lumenal; that stretch reads SEVGPSYAFHKSASR. A helical membrane pass occupies residues 1277–1297; that stretch reads TCQTFGFWCVTVLTIALCLLP. Position 1298 (Arg-1298) interacts with a 1,2-diacyl-sn-glycero-3-phospho-L-serine. Over 1298–1367 the chain is Cytoplasmic; it reads RFSYICLQKL…TSVSFDDSNK (70 aa).

Belongs to the cation transport ATPase (P-type) (TC 3.A.3) family. Type IV subfamily. It depends on Mg(2+) as a cofactor.

The protein resides in the cell membrane. The protein localises to the endoplasmic reticulum membrane. It carries out the reaction ATP + H2O + phospholipidSide 1 = ADP + phosphate + phospholipidSide 2.. The enzyme catalyses a 1,2-diacyl-sn-glycero-3-phosphoethanolamine(out) + ATP + H2O = a 1,2-diacyl-sn-glycero-3-phosphoethanolamine(in) + ADP + phosphate + H(+). The catalysed reaction is a 1,2-diacyl-sn-glycero-3-phosphocholine(out) + ATP + H2O = a 1,2-diacyl-sn-glycero-3-phosphocholine(in) + ADP + phosphate + H(+). It catalyses the reaction a beta-D-glucosyl-(1&lt;-&gt;1')-N-acylsphing-4-enine(out) + ATP + H2O = a beta-D-glucosyl-(1&lt;-&gt;1')-N-acylsphing-4-enine(in) + ADP + phosphate + H(+). It carries out the reaction a 1,2-diacyl-sn-glycero-3-phospho-L-serine(out) + ATP + H2O = a 1,2-diacyl-sn-glycero-3-phospho-L-serine(in) + ADP + phosphate + H(+). In terms of biological role, catalytic component of a P4-ATPase flippase complex which catalyzes the hydrolysis of ATP coupled to the transport of glucosylceramide, phosphatidylcholine, phosphatidylethanolamine, and small amounts of phosphatidylserine from the lumenal to the cytosolic leaflet of the cell membrane and ensures the maintenance of asymmetric distribution of phospholipids. In Schizosaccharomyces pombe (strain 972 / ATCC 24843) (Fission yeast), this protein is Phospholipid-transporting ATPase C4F10.16c.